The sequence spans 270 residues: Electron transfer flavoprotein subunit beta (270 aa).

The protein belongs to the ETF alpha-subunit/FixB family. In terms of assembly, heterodimer of an alpha and a beta subunit. FAD serves as cofactor.

Functionally, the electron transfer flavoprotein serves as a specific electron acceptor for other dehydrogenases. It transfers the electrons to the main respiratory chain via ETF-ubiquinone oxidoreductase (ETF dehydrogenase). The protein is Electron transfer flavoprotein subunit beta (etfB) of Megasphaera elsdenii.